A 156-amino-acid polypeptide reads, in one-letter code: MTRRGLTLLELLLVLGILGVLLGLALPLLSPNRLALDQAARSLATQVTRARLEAIRRNAFVGLQVFTEGAGGYLLFVDQNANRRYDPGEEFGATHFGQGNWARVRLDPEKSALGNMPLLFDPRGIPAKPITATLVLTSGGATRKVVISQQGRARLE.

Positions 1-5 are cleaved as a propeptide — leader sequence; that stretch reads MTRRG. At Leu-6 the chain carries N-methylleucine. Residues 6-29 form a helical membrane-spanning segment; that stretch reads LTLLELLLVLGILGVLLGLALPLL.

Its subcellular location is the cell inner membrane. It localises to the cell outer membrane. The protein localises to the periplasm. In terms of biological role, plays an essential role in natural DNA transformation but is not required for pilus biogenesis. The polypeptide is Pilin-like protein PilA1 (pilA1) (Thermus thermophilus (strain ATCC BAA-163 / DSM 7039 / HB27)).